We begin with the raw amino-acid sequence, 202 residues long: Imidazoleglycerol-phosphate dehydratase (202 aa).

It belongs to the imidazoleglycerol-phosphate dehydratase family.

The protein resides in the cytoplasm. The catalysed reaction is D-erythro-1-(imidazol-4-yl)glycerol 3-phosphate = 3-(imidazol-4-yl)-2-oxopropyl phosphate + H2O. Its pathway is amino-acid biosynthesis; L-histidine biosynthesis; L-histidine from 5-phospho-alpha-D-ribose 1-diphosphate: step 6/9. In Clavibacter michiganensis subsp. michiganensis (strain NCPPB 382), this protein is Imidazoleglycerol-phosphate dehydratase.